The chain runs to 259 residues: MADS-box protein ZMM17 (259 aa).

The 61-residue stretch at 1-61 (MGRGKIEIKR…GKMFEYCSPA (61 aa)) folds into the MADS-box domain. Residues 85-175 (DQQILLEMTR…YRMINENQQA (91 aa)) form the K-box domain. The disordered stretch occupies residues 237–259 (PTQPNLQDPAAPCGGLHGHGLQL).

Strong expression in female inflorescences (ears), but also weak expression in male inflorescences (tassels). At early stages of the development of the female spiklet, expressed in all organ primordia but later restricted to the ovule and the developing silk. At very late stages of development, expression becomes restricted to parts of the silk.

The protein resides in the nucleus. Its function is as follows. Probable transcription factor. The protein is MADS-box protein ZMM17 (M17) of Zea mays (Maize).